Here is a 209-residue protein sequence, read N- to C-terminus: MSSQYSNVENLSPQTIRQVMRELQEMETTPPEGIKVLINESDVTDIQALIDGPAGTPYAAGVFRVKLTLNKDFPQTPPKAYFLTKIFHPNVAANGEICVNTLKKDWKPDLGIKHILLTIKCLLIVPNPESALNEEAGKMLLERYDDYSQRARMMTEIHAQPAKCGVGASGDAKDDDGPSTKKHAGLDKKLQDKKKEKLLKEKKRMLKRL.

One can recognise a UBC core domain in the interval 14 to 160 (QTIRQVMREL…ARMMTEIHAQ (147 aa)). Catalysis depends on C98, which acts as the Glycyl thioester intermediate. Positions 164–209 (CGVGASGDAKDDDGPSTKKHAGLDKKLQDKKKEKLLKEKKRMLKRL) are disordered. The span at 171-199 (DAKDDDGPSTKKHAGLDKKLQDKKKEKLL) shows a compositional bias: basic and acidic residues. The span at 200-209 (KEKKRMLKRL) shows a compositional bias: basic residues.

The protein belongs to the ubiquitin-conjugating enzyme family.

It carries out the reaction S-ubiquitinyl-[E1 ubiquitin-activating enzyme]-L-cysteine + [E2 ubiquitin-conjugating enzyme]-L-cysteine = [E1 ubiquitin-activating enzyme]-L-cysteine + S-ubiquitinyl-[E2 ubiquitin-conjugating enzyme]-L-cysteine.. It participates in protein modification; protein ubiquitination. Its function is as follows. Catalyzes the covalent attachment of ubiquitin to other proteins. Acts as an essential factor of the anaphase promoting complex/cyclosome (APC/C), a cell cycle-regulated ubiquitin ligase that controls progression through mitosis. Acts by specifically elongating polyubiquitin chains initiated by the E2 enzyme vih/UbcH10 on APC/C substrates, enhancing the degradation of APC/C substrates by the proteasome and promoting mitotic exit. This is Ubiquitin-conjugating enzyme E2 S from Drosophila yakuba (Fruit fly).